The sequence spans 237 residues: Phosphoribosylaminoimidazole-succinocarboxamide synthase (237 aa).

Belongs to the SAICAR synthetase family.

It catalyses the reaction 5-amino-1-(5-phospho-D-ribosyl)imidazole-4-carboxylate + L-aspartate + ATP = (2S)-2-[5-amino-1-(5-phospho-beta-D-ribosyl)imidazole-4-carboxamido]succinate + ADP + phosphate + 2 H(+). It functions in the pathway purine metabolism; IMP biosynthesis via de novo pathway; 5-amino-1-(5-phospho-D-ribosyl)imidazole-4-carboxamide from 5-amino-1-(5-phospho-D-ribosyl)imidazole-4-carboxylate: step 1/2. The polypeptide is Phosphoribosylaminoimidazole-succinocarboxamide synthase (Pseudomonas fluorescens (strain SBW25)).